The following is a 183-amino-acid chain: Putative NAD(P)H nitroreductase YdjA (183 aa).

FMN contacts are provided by residues 10–12, Arg35, and His39; that span reads RRS. Position 121-126 (121-126) interacts with NAD(+); sequence AAVAQG. 131-133 contacts FMN; the sequence is WRS.

It belongs to the nitroreductase family. In terms of assembly, homodimer. The cofactor is FMN.

This Escherichia coli O157:H7 protein is Putative NAD(P)H nitroreductase YdjA (ydjA).